A 298-amino-acid chain; its full sequence is ATP synthase gamma chain (298 aa).

The protein belongs to the ATPase gamma chain family. In terms of assembly, F-type ATPases have 2 components, CF(1) - the catalytic core - and CF(0) - the membrane proton channel. CF(1) has five subunits: alpha(3), beta(3), gamma(1), delta(1), epsilon(1). CF(0) has three main subunits: a, b and c.

Its subcellular location is the cell inner membrane. Its function is as follows. Produces ATP from ADP in the presence of a proton gradient across the membrane. The gamma chain is believed to be important in regulating ATPase activity and the flow of protons through the CF(0) complex. In Francisella tularensis subsp. tularensis (strain FSC 198), this protein is ATP synthase gamma chain.